Consider the following 235-residue polypeptide: 2-C-methyl-D-erythritol 4-phosphate cytidylyltransferase (235 aa).

It belongs to the IspD/TarI cytidylyltransferase family. IspD subfamily. Homodimer.

The enzyme catalyses 2-C-methyl-D-erythritol 4-phosphate + CTP + H(+) = 4-CDP-2-C-methyl-D-erythritol + diphosphate. Its pathway is isoprenoid biosynthesis; isopentenyl diphosphate biosynthesis via DXP pathway; isopentenyl diphosphate from 1-deoxy-D-xylulose 5-phosphate: step 2/6. Its function is as follows. Catalyzes the formation of 4-diphosphocytidyl-2-C-methyl-D-erythritol from CTP and 2-C-methyl-D-erythritol 4-phosphate (MEP). This chain is 2-C-methyl-D-erythritol 4-phosphate cytidylyltransferase, found in Serratia proteamaculans (strain 568).